A 119-amino-acid polypeptide reads, in one-letter code: DNA-binding protein inhibitor ID-3 (119 aa).

The bHLH domain occupies 28-80; it reads RGKGPAAEEPLSLLDDMNHCYSRLRELVPGVPRGTQLSQVEILQRVIDYILDL.

Homodimer, and heterodimer with other HLH proteins. Interacts with COPS5 and COPS7A. Interacts with IFI204. Interacts with GATA4 and NKX2-5. Interacts with ANKRD2; both proteins cooperate in myoblast differentiation. Interacts with CLOCK and BMAL1.

The protein localises to the nucleus. In terms of biological role, transcriptional regulator (lacking a basic DNA binding domain) which negatively regulates the basic helix-loop-helix (bHLH) transcription factors by forming heterodimers and inhibiting their DNA binding and transcriptional activity. Implicated in regulating a variety of cellular processes, including cellular growth, senescence, differentiation, apoptosis, angiogenesis, and neoplastic transformation. Involved in myogenesis by inhibiting skeletal muscle and cardiac myocyte differentiation and promoting muscle precursor cells proliferation. Inhibits the binding of E2A-containing protein complexes to muscle creatine kinase E-box enhancer. Regulates the circadian clock by repressing the transcriptional activator activity of the CLOCK-BMAL1 heterodimer. The sequence is that of DNA-binding protein inhibitor ID-3 (ID3) from Canis lupus familiaris (Dog).